The primary structure comprises 352 residues: Beta-methylmalyl-CoA dehydratase (352 aa).

The MaoC-like domain maps to 16 to 129 (LGQTIVHATP…GKTGVVYVHS (114 aa)). Residues 62–65 (PIDS), 85–88 (IANL), and 96–98 (GAV) contribute to the substrate site.

In terms of assembly, homodimer.

The enzyme catalyses (2R,3S)-beta-methylmalyl-CoA = 2-methylfumaryl-CoA + H2O. Involved in the glyoxylate assimilation cycle used to regenerate acetyl-CoA and produce pyruvate as universal precursor for biosynthesis. Catalyzes the reversible dehydration of beta-methylmalyl-CoA ((2R,3S)-beta-methylmalyl-CoA) to yield mesaconyl-CoA (2-methylfumaryl-CoA). The protein is Beta-methylmalyl-CoA dehydratase (mch) of Chloroflexus aurantiacus (strain ATCC 29366 / DSM 635 / J-10-fl).